We begin with the raw amino-acid sequence, 132 residues long: Small ribosomal subunit protein bS6 (132 aa).

The tract at residues 96-132 is disordered; the sequence is HAEGPSIQMQKRDERERGDRGDRSDRGDRGDRGGFRR. Residues 105–132 are compositionally biased toward basic and acidic residues; it reads QKRDERERGDRGDRSDRGDRGDRGGFRR.

Belongs to the bacterial ribosomal protein bS6 family.

In terms of biological role, binds together with bS18 to 16S ribosomal RNA. The sequence is that of Small ribosomal subunit protein bS6 from Cereibacter sphaeroides (strain ATCC 17023 / DSM 158 / JCM 6121 / CCUG 31486 / LMG 2827 / NBRC 12203 / NCIMB 8253 / ATH 2.4.1.) (Rhodobacter sphaeroides).